A 200-amino-acid polypeptide reads, in one-letter code: Probable GTP-binding protein EngB (200 aa).

In terms of domain architecture, EngB-type G spans 22–197 (NLPEYAFIGR…LDYIDSINRS (176 aa)). GTP is bound by residues 30 to 37 (GRSNVGKS), 57 to 61 (GKTLL), 75 to 78 (DLPG), 142 to 145 (TKAD), and 173 to 178 (HFVSSS). Mg(2+)-binding residues include S37 and T59.

This sequence belongs to the TRAFAC class TrmE-Era-EngA-EngB-Septin-like GTPase superfamily. EngB GTPase family. Mg(2+) is required as a cofactor.

Functionally, necessary for normal cell division and for the maintenance of normal septation. The chain is Probable GTP-binding protein EngB from Phocaeicola vulgatus (strain ATCC 8482 / DSM 1447 / JCM 5826 / CCUG 4940 / NBRC 14291 / NCTC 11154) (Bacteroides vulgatus).